The chain runs to 79 residues: MPKRILQGVVVSDKSDKTVVVKVERRYSHPLLKKTVRQSKKYKAHDENNQFKIGDQISIQESKPISKDKRWIVVKDSVA.

The protein belongs to the universal ribosomal protein uS17 family. In terms of assembly, part of the 30S ribosomal subunit.

In terms of biological role, one of the primary rRNA binding proteins, it binds specifically to the 5'-end of 16S ribosomal RNA. This chain is Small ribosomal subunit protein uS17, found in Bartonella quintana (strain Toulouse) (Rochalimaea quintana).